The primary structure comprises 192 residues: Orotate phosphoribosyltransferase 2 (192 aa).

116–124 serves as a coordination point for 5-phospho-alpha-D-ribose 1-diphosphate; that stretch reads EDIVTTGLS. Orotate is bound by residues T120 and R148.

The protein belongs to the purine/pyrimidine phosphoribosyltransferase family. PyrE subfamily. As to quaternary structure, homodimer. It depends on Mg(2+) as a cofactor.

The enzyme catalyses orotidine 5'-phosphate + diphosphate = orotate + 5-phospho-alpha-D-ribose 1-diphosphate. The protein operates within pyrimidine metabolism; UMP biosynthesis via de novo pathway; UMP from orotate: step 1/2. Its function is as follows. Catalyzes the transfer of a ribosyl phosphate group from 5-phosphoribose 1-diphosphate to orotate, leading to the formation of orotidine monophosphate (OMP). The protein is Orotate phosphoribosyltransferase 2 of Mesorhizobium japonicum (strain LMG 29417 / CECT 9101 / MAFF 303099) (Mesorhizobium loti (strain MAFF 303099)).